A 450-amino-acid polypeptide reads, in one-letter code: Probable glycine dehydrogenase (decarboxylating) subunit 1 (450 aa).

This sequence belongs to the GcvP family. N-terminal subunit subfamily. As to quaternary structure, the glycine cleavage system is composed of four proteins: P, T, L and H. In this organism, the P 'protein' is a heterodimer of two subunits.

It carries out the reaction N(6)-[(R)-lipoyl]-L-lysyl-[glycine-cleavage complex H protein] + glycine + H(+) = N(6)-[(R)-S(8)-aminomethyldihydrolipoyl]-L-lysyl-[glycine-cleavage complex H protein] + CO2. Functionally, the glycine cleavage system catalyzes the degradation of glycine. The P protein binds the alpha-amino group of glycine through its pyridoxal phosphate cofactor; CO(2) is released and the remaining methylamine moiety is then transferred to the lipoamide cofactor of the H protein. This chain is Probable glycine dehydrogenase (decarboxylating) subunit 1, found in Staphylococcus haemolyticus (strain JCSC1435).